The sequence spans 392 residues: Probable glucan endo-1,6-beta-glucosidase B (392 aa).

The first 18 residues, 1-18 (MKVTRLAVLNTLATLTVA), serve as a signal peptide directing secretion. N-linked (GlcNAc...) asparagine glycosylation occurs at asparagine 31. Glutamate 220 functions as the Proton donor in the catalytic mechanism. Glutamate 322 serves as the catalytic Nucleophile.

This sequence belongs to the glycosyl hydrolase 5 (cellulase A) family.

It is found in the secreted. It carries out the reaction Random hydrolysis of (1-&gt;6)-linkages in (1-&gt;6)-beta-D-glucans.. In terms of biological role, beta-glucanases participate in the metabolism of beta-glucan, the main structural component of the cell wall. Acts on lutean, pustulan and 1,6-oligo-beta-D-glucosides. In Aspergillus flavus (strain ATCC 200026 / FGSC A1120 / IAM 13836 / NRRL 3357 / JCM 12722 / SRRC 167), this protein is Probable glucan endo-1,6-beta-glucosidase B (exgB).